A 644-amino-acid chain; its full sequence is Exoribonuclease 2 (644 aa).

One can recognise an RNB domain in the interval 189 to 516; sequence REDLTALDFV…NHRLLKAVIK (328 aa). One can recognise an S1 motif domain in the interval 561 to 643; that stretch reads DTRFAAEIVD…ETRSIIARPV (83 aa).

It belongs to the RNR ribonuclease family. RNase II subfamily.

It is found in the cytoplasm. The catalysed reaction is Exonucleolytic cleavage in the 3'- to 5'-direction to yield nucleoside 5'-phosphates.. Involved in mRNA degradation. Hydrolyzes single-stranded polyribonucleotides processively in the 3' to 5' direction. This chain is Exoribonuclease 2, found in Escherichia coli O8 (strain IAI1).